The following is a 379-amino-acid chain: Cytochrome b (379 aa).

4 consecutive transmembrane segments (helical) span residues 33-53 (FGSLLGMCLVIQILTGLFLAM), 77-98 (WLIRYLHANGASMFFICLFIHV), 113-133 (WNIGIILLLTTMATAFVGYVL), and 178-198 (FFAFHFILPFIIAAFALVHLL). The heme b site is built by His-83 and His-97. Positions 182 and 196 each coordinate heme b. His-201 provides a ligand contact to a ubiquinone. 4 helical membrane-spanning segments follow: residues 226 to 246 (TKDLLGIFLLLLVLMILALFF), 288 to 308 (LGGVLALVLSILILATFPLLN), 320 to 340 (VTQVIYWIFIANLLVLTWIGG), and 347 to 367 (FTTIGQIASITYFTIIIILIP).

The protein belongs to the cytochrome b family. In terms of assembly, the cytochrome bc1 complex contains 11 subunits: 3 respiratory subunits (MT-CYB, CYC1 and UQCRFS1), 2 core proteins (UQCRC1 and UQCRC2) and 6 low-molecular weight proteins (UQCRH/QCR6, UQCRB/QCR7, UQCRQ/QCR8, UQCR10/QCR9, UQCR11/QCR10 and a cleavage product of UQCRFS1). This cytochrome bc1 complex then forms a dimer. Requires heme b as cofactor.

It localises to the mitochondrion inner membrane. Functionally, component of the ubiquinol-cytochrome c reductase complex (complex III or cytochrome b-c1 complex) that is part of the mitochondrial respiratory chain. The b-c1 complex mediates electron transfer from ubiquinol to cytochrome c. Contributes to the generation of a proton gradient across the mitochondrial membrane that is then used for ATP synthesis. This Akodon mystax (Caparao grass mouse) protein is Cytochrome b (MT-CYB).